The chain runs to 517 residues: Maturase K (517 aa).

It belongs to the intron maturase 2 family. MatK subfamily.

The protein localises to the plastid. It localises to the chloroplast. In terms of biological role, usually encoded in the trnK tRNA gene intron. Probably assists in splicing its own and other chloroplast group II introns. The protein is Maturase K of Veronica arvensis (Wall speedwell).